We begin with the raw amino-acid sequence, 141 residues long: Large ribosomal subunit protein uL11 (141 aa).

The protein belongs to the universal ribosomal protein uL11 family. As to quaternary structure, part of the ribosomal stalk of the 50S ribosomal subunit. Interacts with L10 and the large rRNA to form the base of the stalk. L10 forms an elongated spine to which L12 dimers bind in a sequential fashion forming a multimeric L10(L12)X complex. In terms of processing, one or more lysine residues are methylated.

Functionally, forms part of the ribosomal stalk which helps the ribosome interact with GTP-bound translation factors. This Chlorobaculum tepidum (strain ATCC 49652 / DSM 12025 / NBRC 103806 / TLS) (Chlorobium tepidum) protein is Large ribosomal subunit protein uL11.